Consider the following 251-residue polypeptide: CDP-diacylglycerol pyrophosphatase (251 aa).

A helical transmembrane segment spans residues 4 to 24 (AGLLFLVMIVIAVVAAGIGYW).

It belongs to the Cdh family.

The protein resides in the cell inner membrane. It catalyses the reaction a CDP-1,2-diacyl-sn-glycerol + H2O = a 1,2-diacyl-sn-glycero-3-phosphate + CMP + 2 H(+). It participates in phospholipid metabolism; CDP-diacylglycerol degradation; phosphatidate from CDP-diacylglycerol: step 1/1. The polypeptide is CDP-diacylglycerol pyrophosphatase (Escherichia coli O9:H4 (strain HS)).